The following is a 106-amino-acid chain: MCNCKKNIKVDESYVSFKDIDCFENACLVIDNLLRILKEPKNTNAYWEKFIEKIPEAYYTRDSKKDPSEALLYLVCSCTSNIMELFEEIDDEEAIDAMSKCEQECC.

This sequence belongs to the CowN family.

Functionally, is required to sustain N(2)-dependent growth in the presence of low levels of carbon monoxide (CO). Probably acts by protecting the N(2) fixation ability of the nitrogenase complex, which is inactivated in the presence of CO. The chain is N(2)-fixation sustaining protein CowN from Denitrovibrio acetiphilus (strain DSM 12809 / NBRC 114555 / N2460).